A 188-amino-acid polypeptide reads, in one-letter code: ATP synthase subunit b (188 aa).

Residues 5–25 traverse the membrane as a helical segment; it reads MLLIFMMIVMIASSAMAAEAE.

This sequence belongs to the ATPase B chain family. F-type ATPases have 2 components, F(1) - the catalytic core - and F(0) - the membrane proton channel. F(1) has five subunits: alpha(3), beta(3), gamma(1), delta(1), epsilon(1). F(0) has three main subunits: a(1), b(2) and c(10-14). The alpha and beta chains form an alternating ring which encloses part of the gamma chain. F(1) is attached to F(0) by a central stalk formed by the gamma and epsilon chains, while a peripheral stalk is formed by the delta and b chains.

It localises to the cell inner membrane. F(1)F(0) ATP synthase produces ATP from ADP in the presence of a proton or sodium gradient. F-type ATPases consist of two structural domains, F(1) containing the extramembraneous catalytic core and F(0) containing the membrane proton channel, linked together by a central stalk and a peripheral stalk. During catalysis, ATP synthesis in the catalytic domain of F(1) is coupled via a rotary mechanism of the central stalk subunits to proton translocation. Functionally, component of the F(0) channel, it forms part of the peripheral stalk, linking F(1) to F(0). In Thermodesulfovibrio yellowstonii (strain ATCC 51303 / DSM 11347 / YP87), this protein is ATP synthase subunit b.